A 432-amino-acid chain; its full sequence is Leucine-rich repeat-containing protein ODA7 (432 aa).

5 LRR repeats span residues asparagine 47–alanine 68, aspartate 69–proline 90, glycine 91–proline 112, alanine 113–alanine 134, and alanine 138–lysine 159. The region spanning proline 173 to tryptophan 211 is the LRRCT domain. Positions leucine 212–glutamine 243 form a coiled coil. Disordered regions lie at residues arginine 297–glutamate 332 and glutamate 368–aspartate 432. Low complexity-rich tracts occupy residues glycine 323–glutamate 332 and valine 407–alanine 425.

This sequence belongs to the DNAAF1 family. Interacts with both outer row and I1 inner row dyneins.

It localises to the cytoplasm. The protein resides in the cytoskeleton. Its subcellular location is the cilium axoneme. Cilium-specific protein required for cilia structures. Axonemal dynein-associated protein that participates in a structural link between inner and outer row dyneins. The chain is Leucine-rich repeat-containing protein ODA7 (ODA7) from Chlamydomonas reinhardtii (Chlamydomonas smithii).